The primary structure comprises 178 residues: MAEAITIARPYAVAVYRLAKEKNALADWSQMLALAAAIAADEQMRAFIDNPKVDAADLERVFLSVSGDRLNEAGTNLIKLLVEYGRLSILPEIAAAFEALKAQDEGVLEAEITAAVQPSDAEFSAIVKRLEAKFGKKVEASVKVDPEIIGGIKIVVGDTVIDASVRGQLQELAYTLKG.

The protein belongs to the ATPase delta chain family. F-type ATPases have 2 components, F(1) - the catalytic core - and F(0) - the membrane proton channel. F(1) has five subunits: alpha(3), beta(3), gamma(1), delta(1), epsilon(1). F(0) has three main subunits: a(1), b(2) and c(10-14). The alpha and beta chains form an alternating ring which encloses part of the gamma chain. F(1) is attached to F(0) by a central stalk formed by the gamma and epsilon chains, while a peripheral stalk is formed by the delta and b chains.

It localises to the cell inner membrane. F(1)F(0) ATP synthase produces ATP from ADP in the presence of a proton or sodium gradient. F-type ATPases consist of two structural domains, F(1) containing the extramembraneous catalytic core and F(0) containing the membrane proton channel, linked together by a central stalk and a peripheral stalk. During catalysis, ATP synthesis in the catalytic domain of F(1) is coupled via a rotary mechanism of the central stalk subunits to proton translocation. Its function is as follows. This protein is part of the stalk that links CF(0) to CF(1). It either transmits conformational changes from CF(0) to CF(1) or is implicated in proton conduction. This chain is ATP synthase subunit delta, found in Methylobacillus flagellatus (strain ATCC 51484 / DSM 6875 / VKM B-1610 / KT).